A 274-amino-acid chain; its full sequence is MTGSIFEGKWQYVDHTTGLQPMQSFSFDDMYCHLVGQGNDAVVRTWVHNHVVILGIHDARLPYLAEGIEYLNNKGYGAIVRNSGGLGVVLDAGVLNISLIFKGDISFSIDAGYEYMYELVQEMFASYGKRIEAKEITRSYCPGSYDLSIDGKKFAGISQRRVKGGIAVQIYLCIEGSGSERAELMRQFYDIALRGEVTKFHYPDIDSSCMASLEELLETELSVEEVLFKLLFAMKTLGATLSNNEMTNDMWTLYNIYFERMIERNSKLKINQEG.

One can recognise a BPL/LPL catalytic domain in the interval 37 to 242; it reads QGNDAVVRTW…AMKTLGATLS (206 aa). Cys-141 (acyl-thioester intermediate) is an active-site residue.

This sequence belongs to the octanoyltransferase LipL family.

It catalyses the reaction N(6)-octanoyl-L-lysyl-[glycine-cleavage complex H protein] + L-lysyl-[lipoyl-carrier protein] = N(6)-octanoyl-L-lysyl-[lipoyl-carrier protein] + L-lysyl-[glycine-cleavage complex H protein]. It functions in the pathway protein modification; protein lipoylation via endogenous pathway; protein N(6)-(lipoyl)lysine from octanoyl-[acyl-carrier-protein]. Functionally, catalyzes the amidotransfer (transamidation) of the octanoyl moiety from octanoyl-GcvH to the lipoyl domain of the E2 subunit of lipoate-dependent enzymes. In Macrococcus caseolyticus (strain JCSC5402) (Macrococcoides caseolyticum), this protein is Octanoyl-[GcvH]:protein N-octanoyltransferase.